We begin with the raw amino-acid sequence, 552 residues long: Urocanate hydratase (552 aa).

Residues 49–50 (GG), Gln-127, 173–175 (GMG), Asp-193, 239–240 (NA), 260–264 (QTSAH), 270–271 (YV), and Tyr-319 contribute to the NAD(+) site. The active site involves Cys-407. Gly-489 is an NAD(+) binding site.

It belongs to the urocanase family. The cofactor is NAD(+).

The protein resides in the cytoplasm. The enzyme catalyses 4-imidazolone-5-propanoate = trans-urocanate + H2O. It participates in amino-acid degradation; L-histidine degradation into L-glutamate; N-formimidoyl-L-glutamate from L-histidine: step 2/3. Catalyzes the conversion of urocanate to 4-imidazolone-5-propionate. The polypeptide is Urocanate hydratase (Bacillus cytotoxicus (strain DSM 22905 / CIP 110041 / 391-98 / NVH 391-98)).